Consider the following 367-residue polypeptide: Choline-phosphate cytidylyltransferase A (367 aa).

The residue at position 1 (Met1) is an N-acetylmethionine. The tract at residues 1–31 (MDAQSSAKVNSRKRRKEVPGPNGATEEDGIP) is disordered. Lys8 carries the post-translational modification N6-acetyllysine. Positions 84, 85, 92, and 122 each coordinate CTP. Residues Lys122 and Trp151 each contribute to the phosphocholine site. Positions 168, 169, 173, 195, 196, 197, and 200 each coordinate CTP. 2 amphipathic regions span residues 228 to 287 (KELN…EFIG) and 298 to 315 (ALKHMLKEGKGRMLQAIS). Ser233 carries the post-translational modification Phosphoserine. The segment at 272–293 (IDLIQKWEEKSREFIGSFLEMF) is autoinhibitory (AI). The interval 313–367 (AISPKQSPSSSPTHERSPSPSFRWPFSGKTSPSSSPASLSRCKAVTCDISEDEED) is disordered. Ser315 carries the post-translational modification Phosphoserine; by PKC. Polar residues predominate over residues 315-324 (SPKQSPSSSP). 4 positions are modified to phosphoserine: Ser319, Ser321, Ser322, and Ser323. The stretch at 319-324 (SPSSSP) is repeat 1. Residues 319–348 (SPSSSPTHERSPSPSFRWPFSGKTSPSSSP) form a 3 X repeats region. Thr325 is modified (phosphothreonine). Ser329 and Ser331 each carry phosphoserine. One copy of the 2; approximate repeat lies at 329–333 (SPSPS). Residues 330 to 352 (PSPSFRWPFSGKTSPSSSPASLS) are compositionally biased toward low complexity. A Phosphoserine; by PKC modification is found at Ser333. At Thr342 the chain carries Phosphothreonine. Phosphoserine occurs at positions 343, 345, 346, 347, 350, and 352. The stretch at 343–348 (SPSSSP) is repeat 3. Thr358 bears the Phosphothreonine mark. The residue at position 362 (Ser362) is a Phosphoserine; by CK2.

The protein belongs to the cytidylyltransferase family. Homodimer. In terms of processing, the serine residues of the C-terminus are phosphorylated. The inactive soluble form is stabilized by phosphorylation, the active membrane bound form is promoted by anionic lipids or diacylglycerol, and is stabilized by dephosphorylation. Post-translationally, the N-terminus is blocked. Monoubiquitinated by the SCF(FBXL2) complex, leading to proteasomal degradation.

The protein resides in the cytoplasm. It is found in the cytosol. The protein localises to the membrane. Its subcellular location is the endoplasmic reticulum membrane. It localises to the nucleus. It catalyses the reaction phosphocholine + CTP + H(+) = CDP-choline + diphosphate. It participates in phospholipid metabolism; phosphatidylcholine biosynthesis; phosphatidylcholine from phosphocholine: step 1/2. With respect to regulation, interconverts between an inactive cytosolic form and an active membrane-bound form. Activation involves disruption of an inhibitory interaction between helices at the base of the active site and the autoinhibitory (AI) region. Activated by N-methylethanolamine. Activated by oleic acid-containing phosphatidylcholine vesicles. Its function is as follows. Catalyzes the key rate-limiting step in the CDP-choline pathway for phosphatidylcholine biosynthesis. The sequence is that of Choline-phosphate cytidylyltransferase A (Pcyt1a) from Rattus norvegicus (Rat).